The chain runs to 320 residues: Cytochrome f (320 aa).

The N-terminal stretch at 1-35 (MQTRNAFSWLKKQITRSISVSLMIYILTRTSISSA) is a signal peptide. The heme site is built by Tyr-36, Cys-56, Cys-59, and His-60. A helical membrane pass occupies residues 286–306 (AQGLLFFLASVILAQIFLVLK).

Belongs to the cytochrome f family. The 4 large subunits of the cytochrome b6-f complex are cytochrome b6, subunit IV (17 kDa polypeptide, petD), cytochrome f and the Rieske protein, while the 4 small subunits are PetG, PetL, PetM and PetN. The complex functions as a dimer. The cofactor is heme.

Its subcellular location is the plastid. It localises to the chloroplast thylakoid membrane. Component of the cytochrome b6-f complex, which mediates electron transfer between photosystem II (PSII) and photosystem I (PSI), cyclic electron flow around PSI, and state transitions. In Nicotiana tomentosiformis (Tobacco), this protein is Cytochrome f.